We begin with the raw amino-acid sequence, 282 residues long: tRNA (guanine-N(7)-)-methyltransferase (282 aa).

Residues 1–29 (MPHAPAKRQKREEYKNALHEDESNAALPK) are disordered. The span at 10–22 (KREEYKNALHEDE) shows a compositional bias: basic and acidic residues. S-adenosyl-L-methionine contacts are provided by residues Gly104, 153 to 154 (NT), and Cys173. Asp176 is a catalytic residue. Position 255–257 (255–257 (TEE)) interacts with S-adenosyl-L-methionine.

This sequence belongs to the class I-like SAM-binding methyltransferase superfamily. TrmB family. As to quaternary structure, forms a complex with TRM82.

It localises to the nucleus. It carries out the reaction guanosine(46) in tRNA + S-adenosyl-L-methionine = N(7)-methylguanosine(46) in tRNA + S-adenosyl-L-homocysteine. It participates in tRNA modification; N(7)-methylguanine-tRNA biosynthesis. Catalyzes the formation of N(7)-methylguanine at position 46 (m7G46) in tRNA. The polypeptide is tRNA (guanine-N(7)-)-methyltransferase (Phaeosphaeria nodorum (strain SN15 / ATCC MYA-4574 / FGSC 10173) (Glume blotch fungus)).